Reading from the N-terminus, the 254-residue chain is Pyrroloquinoline-quinone synthase (254 aa).

Belongs to the PqqC family.

It catalyses the reaction 6-(2-amino-2-carboxyethyl)-7,8-dioxo-1,2,3,4,7,8-hexahydroquinoline-2,4-dicarboxylate + 3 O2 = pyrroloquinoline quinone + 2 H2O2 + 2 H2O + H(+). Its pathway is cofactor biosynthesis; pyrroloquinoline quinone biosynthesis. Ring cyclization and eight-electron oxidation of 3a-(2-amino-2-carboxyethyl)-4,5-dioxo-4,5,6,7,8,9-hexahydroquinoline-7,9-dicarboxylic-acid to PQQ. The polypeptide is Pyrroloquinoline-quinone synthase (Rhodopseudomonas palustris (strain ATCC BAA-98 / CGA009)).